Here is a 104-residue protein sequence, read N- to C-terminus: Large ribosomal subunit protein bL21 (104 aa).

It belongs to the bacterial ribosomal protein bL21 family. Part of the 50S ribosomal subunit. Contacts protein L20.

Its function is as follows. This protein binds to 23S rRNA in the presence of protein L20. The chain is Large ribosomal subunit protein bL21 from Pseudomonas entomophila (strain L48).